A 349-amino-acid chain; its full sequence is Dihydroorotate dehydrogenase (quinone) (349 aa).

FMN-binding positions include 67–71 (AGLDK) and Thr91. Lys71 contacts substrate. Residue 116 to 120 (NRLGF) participates in substrate binding. FMN contacts are provided by Asn147 and Asn180. Asn180 lines the substrate pocket. Ser183 serves as the catalytic Nucleophile. Asn185 contributes to the substrate binding site. Residues Lys225 and Thr253 each coordinate FMN. Position 254–255 (254–255 (NT)) interacts with substrate. FMN-binding positions include Gly276, Gly305, and 326–327 (YT).

Belongs to the dihydroorotate dehydrogenase family. Type 2 subfamily. In terms of assembly, monomer. Requires FMN as cofactor.

Its subcellular location is the cell membrane. It catalyses the reaction (S)-dihydroorotate + a quinone = orotate + a quinol. The protein operates within pyrimidine metabolism; UMP biosynthesis via de novo pathway; orotate from (S)-dihydroorotate (quinone route): step 1/1. Functionally, catalyzes the conversion of dihydroorotate to orotate with quinone as electron acceptor. The chain is Dihydroorotate dehydrogenase (quinone) from Bordetella avium (strain 197N).